Reading from the N-terminus, the 212-residue chain is Thymidylate kinase (212 aa).

7–14 is a binding site for ATP; it reads GGEGCGKT.

Belongs to the thymidylate kinase family.

It catalyses the reaction dTMP + ATP = dTDP + ADP. Its function is as follows. Phosphorylation of dTMP to form dTDP in both de novo and salvage pathways of dTTP synthesis. This is Thymidylate kinase from Gloeobacter violaceus (strain ATCC 29082 / PCC 7421).